A 318-amino-acid polypeptide reads, in one-letter code: ADP-L-glycero-D-manno-heptose-6-epimerase (318 aa).

Residues 10–11, 31–32, K38, K53, and 79–83 contribute to the NADP(+) site; these read FI, DD, and EGACS. Y144 (proton acceptor) is an active-site residue. K148 contributes to the NADP(+) binding site. N173 is a substrate binding site. NADP(+)-binding residues include V174 and K182. K182 (proton acceptor) is an active-site residue. Residues S184, H191, 205-208, R218, and Y282 contribute to the substrate site; that span reads FEGC.

It belongs to the NAD(P)-dependent epimerase/dehydratase family. HldD subfamily. In terms of assembly, homopentamer. NADP(+) is required as a cofactor.

It catalyses the reaction ADP-D-glycero-beta-D-manno-heptose = ADP-L-glycero-beta-D-manno-heptose. It participates in nucleotide-sugar biosynthesis; ADP-L-glycero-beta-D-manno-heptose biosynthesis; ADP-L-glycero-beta-D-manno-heptose from D-glycero-beta-D-manno-heptose 7-phosphate: step 4/4. Functionally, catalyzes the interconversion between ADP-D-glycero-beta-D-manno-heptose and ADP-L-glycero-beta-D-manno-heptose via an epimerization at carbon 6 of the heptose. This is ADP-L-glycero-D-manno-heptose-6-epimerase from Aeromonas hydrophila subsp. hydrophila (strain ATCC 7966 / DSM 30187 / BCRC 13018 / CCUG 14551 / JCM 1027 / KCTC 2358 / NCIMB 9240 / NCTC 8049).